The sequence spans 246 residues: Probable transcriptional regulatory protein Dole_0371 (246 aa).

Belongs to the TACO1 family.

It localises to the cytoplasm. In Desulfosudis oleivorans (strain DSM 6200 / JCM 39069 / Hxd3) (Desulfococcus oleovorans), this protein is Probable transcriptional regulatory protein Dole_0371.